The primary structure comprises 31 residues: Cytochrome b6-f complex subunit 6 (31 aa).

Residues 3-23 traverse the membrane as a helical segment; it reads TITSYFGFLLAVLTITSGLFI.

Belongs to the PetL family. In terms of assembly, the 4 large subunits of the cytochrome b6-f complex are cytochrome b6, subunit IV (17 kDa polypeptide, PetD), cytochrome f and the Rieske protein, while the 4 small subunits are PetG, PetL, PetM and PetN. The complex functions as a dimer.

Its subcellular location is the plastid. It is found in the chloroplast thylakoid membrane. Functionally, component of the cytochrome b6-f complex, which mediates electron transfer between photosystem II (PSII) and photosystem I (PSI), cyclic electron flow around PSI, and state transitions. PetL is important for photoautotrophic growth as well as for electron transfer efficiency and stability of the cytochrome b6-f complex. The protein is Cytochrome b6-f complex subunit 6 of Lotus japonicus (Lotus corniculatus var. japonicus).